The chain runs to 270 residues: Large ribosomal subunit protein uL2c (270 aa).

The interval 221–245 (NPIDHPHGGGEGRAPIGRNQPKTPW) is disordered.

It belongs to the universal ribosomal protein uL2 family. In terms of assembly, part of the 50S ribosomal subunit.

The protein localises to the plastid. This Cuscuta gronovii (Common dodder) protein is Large ribosomal subunit protein uL2c (rpl2).